Here is a 68-residue protein sequence, read N- to C-terminus: Protein ShdD (68 aa).

Its function is as follows. Involved in the non-oxidative decarboxylation and detoxification of phenolic derivatives under anaerobic conditions, however the precise biochemical function of ShdD in metabolism of phenolic acid is unknown. The polypeptide is Protein ShdD (Sedimentibacter hydroxybenzoicus (Clostridium hydroxybenzoicum)).